Here is a 101-residue protein sequence, read N- to C-terminus: CRISPR-associated endoribonuclease Cas2 (101 aa).

Asp-8 contacts Mg(2+).

It belongs to the CRISPR-associated endoribonuclease Cas2 protein family. Homodimer, forms a heterotetramer with a Cas1 homodimer. It depends on Mg(2+) as a cofactor.

CRISPR (clustered regularly interspaced short palindromic repeat), is an adaptive immune system that provides protection against mobile genetic elements (viruses, transposable elements and conjugative plasmids). CRISPR clusters contain sequences complementary to antecedent mobile elements and target invading nucleic acids. CRISPR clusters are transcribed and processed into CRISPR RNA (crRNA). Functions as a ssRNA-specific endoribonuclease. Involved in the integration of spacer DNA into the CRISPR cassette. This Parvibaculum lavamentivorans (strain DS-1 / DSM 13023 / NCIMB 13966) protein is CRISPR-associated endoribonuclease Cas2.